The chain runs to 267 residues: Hydroxyethylthiazole kinase (267 aa).

Position 46 (methionine 46) interacts with substrate. The ATP site is built by arginine 121 and threonine 167. Alanine 194 contacts substrate.

The protein belongs to the Thz kinase family. It depends on Mg(2+) as a cofactor.

It catalyses the reaction 5-(2-hydroxyethyl)-4-methylthiazole + ATP = 4-methyl-5-(2-phosphooxyethyl)-thiazole + ADP + H(+). The protein operates within cofactor biosynthesis; thiamine diphosphate biosynthesis; 4-methyl-5-(2-phosphoethyl)-thiazole from 5-(2-hydroxyethyl)-4-methylthiazole: step 1/1. In terms of biological role, catalyzes the phosphorylation of the hydroxyl group of 4-methyl-5-beta-hydroxyethylthiazole (THZ). The chain is Hydroxyethylthiazole kinase from Rhizobium johnstonii (strain DSM 114642 / LMG 32736 / 3841) (Rhizobium leguminosarum bv. viciae).